The sequence spans 308 residues: uncharacterized protein (308 aa).

Residues 212-242 (EADKMTIDYMRELDNLQRQYDGLVDEDKALH) are a coiled coil.

This is an uncharacterized protein from Ostreid herpesvirus 1 (isolate France) (OsHV-1).